Reading from the N-terminus, the 46-residue chain is Large ribosomal subunit protein bL34c (46 aa).

Positions M1–Y46 are disordered. The span at R30–Y46 shows a compositional bias: basic residues.

The protein belongs to the bacterial ribosomal protein bL34 family.

It is found in the plastid. The protein resides in the cyanelle. In Cyanophora paradoxa, this protein is Large ribosomal subunit protein bL34c (rpl34).